A 263-amino-acid polypeptide reads, in one-letter code: Small ribosomal subunit protein uS2 (263 aa).

Residues 228 to 263 (QLEEPEADLADEDDNGMTTSDDGDAEALDIPDDSDA) form a disordered region. A compositionally biased stretch (acidic residues) spans 230 to 263 (EEPEADLADEDDNGMTTSDDGDAEALDIPDDSDA).

This sequence belongs to the universal ribosomal protein uS2 family.

The chain is Small ribosomal subunit protein uS2 from Thermosynechococcus vestitus (strain NIES-2133 / IAM M-273 / BP-1).